A 387-amino-acid chain; its full sequence is O-phospho-L-seryl-tRNA:Cys-tRNA synthase 2 (387 aa).

Pyridoxal 5'-phosphate is bound by residues 89–90 (AR), asparagine 196, and 219–221 (SGH). The residue at position 222 (lysine 222) is an N6-(pyridoxal phosphate)lysine.

It belongs to the SepCysS family. Homodimer. Interacts with SepRS. Pyridoxal 5'-phosphate is required as a cofactor.

The catalysed reaction is O-phospho-L-seryl-tRNA(Cys) + hydrogen sulfide + H(+) = L-cysteinyl-tRNA(Cys) + phosphate. Its function is as follows. Converts O-phospho-L-seryl-tRNA(Cys) (Sep-tRNA(Cys)) to L-cysteinyl-tRNA(Cys) (Cys-tRNA(Cys)). The protein is O-phospho-L-seryl-tRNA:Cys-tRNA synthase 2 of Methanococcoides burtonii (strain DSM 6242 / NBRC 107633 / OCM 468 / ACE-M).